A 138-amino-acid chain; its full sequence is MIEEKKELKKRRVLQMARFYGAAAFTLITMRLISRAIKVRKCNVPSIFQQNYKLPPFSQRNEAMSALTYASAASIGTFSTLIFGFCWALDISTAREFVFKTREFMSLPQALETDTSMDEETSKLTKQLQDLLSSENNK.

2 consecutive transmembrane segments (helical) span residues 17 to 34 (ARFY…RLIS) and 67 to 89 (LTYA…CWAL).

It belongs to the AIM11 family.

It is found in the membrane. The sequence is that of Altered inheritance of mitochondria protein 11 (AIM11) from Saccharomyces cerevisiae (strain JAY291) (Baker's yeast).